Reading from the N-terminus, the 113-residue chain is TYRO protein tyrosine kinase-binding protein (113 aa).

A signal peptide spans 1–27 (MGGLEPCSRLLLLPLLLAVGGLRPVQA). The Extracellular portion of the chain corresponds to 28-40 (QAQSDCSCSTVSP). A helical membrane pass occupies residues 41–61 (GVLAGIVMGDLVLTVLIALAV). Aspartate 50 serves as a coordination point for Ca(2+). At 62 to 113 (YFLGRLVHRGRGAAEAATRKQRITETESPYQELQGQRSDVYSDLNMQRPYYK) the chain is on the cytoplasmic side. The tract at residues 75–113 (AEAATRKQRITETESPYQELQGQRSDVYSDLNMQRPYYK) is disordered. The ITAM domain occupies 80–108 (RKQRITETESPYQELQGQRSDVYSDLNMQ). A compositionally biased stretch (polar residues) spans 87-100 (TESPYQELQGQRSD). Phosphotyrosine occurs at positions 91 and 102.

The protein belongs to the TYROBP family. In terms of assembly, homodimer; disulfide-linked. Homotrimer; disulfide-linked. Homotetramer; disulfide-linked. Homotrimers and homotetramers form when low levels of partner receptors are available and is competitive with assembly with interacting receptors. They may represent alternative oligomerization states or may be intermediates in the receptor assembly process. Binding of a metal cation aids in homooligomerization through coordination of the metal ion by the subunits of the oligomer. Interacts with TREM1. Interacts with TREM2. Interacts with CLECSF5. Interacts with CD300LB and CD300C2. Interacts with CD300E. Interacts (via ITAM domain) with SYK (via SH2 domains); activates SYK mediating neutrophils and macrophages integrin-mediated activation. Interacts with KLRC2. Interacts with CD300H. Interacts with KLRD1. Interacts with SIGLEC1. In terms of processing, following ligand binding by associated receptors, tyrosine phosphorylated in the ITAM domain which leads to activation of additional tyrosine kinases and subsequent cell activation.

It is found in the cell membrane. Adapter protein which non-covalently associates with activating receptors found on the surface of a variety of immune cells to mediate signaling and cell activation following ligand binding by the receptors. TYROBP is tyrosine-phosphorylated in the ITAM domain following ligand binding by the associated receptors which leads to activation of additional tyrosine kinases and subsequent cell activation. Also has an inhibitory role in some cells. Non-covalently associates with activating receptors of the CD300 family to mediate cell activation. Also mediates cell activation through association with activating receptors of the CD200R family. Required for neutrophil activation mediated by integrin. Required for the activation of myeloid cells mediated by the CLEC5A/MDL1 receptor. Associates with natural killer (NK) cell receptors such as the KLRD1/KLRC2 heterodimer to mediate NK cell activation. Associates with TREM1 to mediate activation of neutrophils and monocytes. Associates with TREM2 on monocyte-derived dendritic cells to mediate up-regulation of chemokine receptor CCR7 and dendritic cell maturation and survival. Association with TREM2 mediates cytokine-induced formation of multinucleated giant cells which are formed by the fusion of macrophages. Stabilizes the TREM2 C-terminal fragment (TREM2-CTF) produced by TREM2 ectodomain shedding which suppresses the release of pro-inflammatory cytokines. In microglia, required with TREM2 for phagocytosis of apoptotic neurons. Required with ITGAM/CD11B in microglia to control production of microglial superoxide ions which promote the neuronal apoptosis that occurs during brain development. Promotes pro-inflammatory responses in microglia following nerve injury which accelerates degeneration of injured neurons. Positively regulates the expression of the IRAK3/IRAK-M kinase and IL10 production by liver dendritic cells and inhibits their T cell allosimulatory ability. Negatively regulates B cell proliferation. Required for CSF1-mediated osteoclast cytoskeletal organization. Positively regulates multinucleation during osteoclast development. In Pan troglodytes (Chimpanzee), this protein is TYRO protein tyrosine kinase-binding protein.